Here is a 458-residue protein sequence, read N- to C-terminus: ATP synthase subunit beta (458 aa).

148-155 is a binding site for ATP; the sequence is GGAGVGKT.

The protein belongs to the ATPase alpha/beta chains family. In terms of assembly, F-type ATPases have 2 components, CF(1) - the catalytic core - and CF(0) - the membrane proton channel. CF(1) has five subunits: alpha(3), beta(3), gamma(1), delta(1), epsilon(1). CF(0) has three main subunits: a(1), b(2) and c(9-12). The alpha and beta chains form an alternating ring which encloses part of the gamma chain. CF(1) is attached to CF(0) by a central stalk formed by the gamma and epsilon chains, while a peripheral stalk is formed by the delta and b chains.

It localises to the cell inner membrane. It carries out the reaction ATP + H2O + 4 H(+)(in) = ADP + phosphate + 5 H(+)(out). Functionally, produces ATP from ADP in the presence of a proton gradient across the membrane. The catalytic sites are hosted primarily by the beta subunits. This chain is ATP synthase subunit beta, found in Francisella tularensis subsp. mediasiatica (strain FSC147).